Consider the following 224-residue polypeptide: Ribose-5-phosphate isomerase A (224 aa).

Residues 32–35 (TGST), 85–88 (DGAD), and 98–101 (KGGG) each bind substrate. Catalysis depends on glutamate 107, which acts as the Proton acceptor. Lysine 125 is a binding site for substrate.

The protein belongs to the ribose 5-phosphate isomerase family. Homodimer.

The catalysed reaction is aldehydo-D-ribose 5-phosphate = D-ribulose 5-phosphate. Its pathway is carbohydrate degradation; pentose phosphate pathway; D-ribose 5-phosphate from D-ribulose 5-phosphate (non-oxidative stage): step 1/1. Catalyzes the reversible conversion of ribose-5-phosphate to ribulose 5-phosphate. This Pseudomonas putida (strain W619) protein is Ribose-5-phosphate isomerase A.